The sequence spans 1576 residues: eIF-2-alpha kinase GCN2 (1576 aa).

In terms of domain architecture, RWD spans 16-127 (NEIEALKAIF…SIVQDYLNDW (112 aa)). The interval 180 to 204 (QDELQRRSYETPQSSSKKKTNSKET) is disordered. 2 Protein kinase domains span residues 235-511 (VLPL…HVIR) and 556-928 (FEEL…EEFI). ATP is bound by residues 562 to 570 (LGRGGFGEV) and Lys-585. The tract at residues 673–714 (YNSSADEEDPEASDISFQYSNTSDKEGSSDKDSSIEEASSVK) is disordered. Positions 695–706 (SDKEGSSDKDSS) are enriched in basic and acidic residues. Asp-772 acts as the Proton acceptor in catalysis.

This sequence belongs to the protein kinase superfamily. Ser/Thr protein kinase family. GCN2 subfamily. Homodimer; homodimerization is important for kinase activation by uncharged tRNAs. Interacts (via N-terminal RWD domain) with gcn1 (via N- and C-terminus); this interaction stimulates gcn2 kinase activity in a gcn20-dependent manner in response to amino acid starvation. Interacts (via N-terminus) with the gcn1-gcn20 complex on translating ribosomes in amino acid-starved cells; gcn1 may bind near the ribosomal A-site and promotes the transfer of uncharged tRNAs from the A-site to the tRNA-binding domain in gcn2 for its subsequent kinase activation, and hence allowing fil1 translational activation and derepression of amino acid biosynthetic genes. In terms of processing, autophosphorylated.

The protein localises to the cytoplasm. It carries out the reaction L-seryl-[protein] + ATP = O-phospho-L-seryl-[protein] + ADP + H(+). The catalysed reaction is L-threonyl-[protein] + ATP = O-phospho-L-threonyl-[protein] + ADP + H(+). With respect to regulation, the integrated stress response (ISR) is activated in response to conditions that promote ribosome collisions: gcn1, which acts as a ribosome collision sensor, activates gcn2. The RQC pathway and the integrated stress response (ISR) antagonize each other: hel2 prevents the activation of gcn2, while gcn2 suppresses RQC activation. Ribosome stalling-induced integrated stress response prefers ribosomes with empty A sites. The kinase activity is stimulated upon binding to uncharged tRNAs. In terms of biological role, metabolic-stress sensing protein kinase that phosphorylates the alpha subunit of eukaryotic translation initiation factor 2 (eIF-2-alpha/SUI2) on 'Ser-52' in response to low amino acid, carbon, or purine availability. Required for adapatation to nutrient starvation by acting as a key component of the integrated stress response (ISR), by which cells alter their translational and transcriptional output in response to starvation. Converts phosphorylated eIF-2-alpha/SUI2 either to a competitive inhibitor of translation initiation factor eIF-2B, leading to a global protein synthesis repression, and thus to a reduced overall utilization of amino acids, or to a translational initiation activation of specific mRNAs, such as the transcriptional activator GCN4, and hence allowing GCN4-mediated reprogramming of transcription to alleviate nutrient depletion. Binds uncharged tRNAs. This Schizosaccharomyces pombe (strain 972 / ATCC 24843) (Fission yeast) protein is eIF-2-alpha kinase GCN2.